The chain runs to 549 residues: Neutral amino acid transporter 9 (549 aa).

The tract at residues 1–27 is disordered; the sequence is MDEDSKPLLGSVPTGDYYTDSLDPKQR. The Cytoplasmic portion of the chain corresponds to 1 to 107; the sequence is MDEDSKPLLG…GGDSPIKNPS (107 aa). A helical membrane pass occupies residues 108-128; sequence IVTIFAIWNTMMGTSILSIPW. Residues 117-122 form an important for arginine binding and amino acid transport region; that stretch reads TMMGTS. Residue S122 coordinates arginine. Residues 129-134 are Lumenal-facing; that stretch reads GIKQAG. The helical transmembrane segment at 135 to 155 threads the bilayer; sequence FTLGIIIIVLMGLLTLYCCYR. Residues 156–186 are Cytoplasmic-facing; sequence VLKSTKSIPYVDTSDWEFPDVCKYYFGGFGK. The helical transmembrane segment at 187–213 threads the bilayer; that stretch reads WSSLVFSLVSLIGAMVVYWVLMSNFLF. Residues 214-271 are Lumenal-facing; sequence NTGKFIFNYVHNVNTSDAFGTNGTERVICPYPDVDPHGNSSTSLYSGSDNSTGLEFDH. N-linked (GlcNAc...) asparagine glycosylation is found at N227, N235, N252, and N263. Residues C242 and C412 are joined by a disulfide bond. A helical membrane pass occupies residues 272–288; that stretch reads WWSKTNTIPFYLILLLL. Over 289–297 the chain is Cytoplasmic; it reads PLLNFRSAS. The chain crosses the membrane as a helical span at residues 298-322; that stretch reads FFARFTFLGTISVIYLIFLVTYKAI. Residues 323 to 344 lie on the Lumenal side of the membrane; that stretch reads QLGFHLEFHWFDSSMFFVPEFR. A helical membrane pass occupies residues 345–365; the sequence is TLFPQLSGVLTLAFFIHNCII. The Cytoplasmic portion of the chain corresponds to 366–382; that stretch reads TLMKNNKHQENNVRDLS. A helical transmembrane segment spans residues 383–403; that stretch reads LAYLLVGLTYLYVGVLIFAAF. The Lumenal portion of the chain corresponds to 404-425; the sequence is PSPPLSKECIEPNFLDNFPSSD. A helical membrane pass occupies residues 426–446; the sequence is ILVFVARTFLLFQMTTVYPLL. Residues 432-442 carry the CARC motif motif; sequence RTFLLFQMTTV. The CRAC motif motif lies at 445-451; the sequence is LLGYLVR. Topologically, residues 447 to 467 are cytoplasmic; sequence GYLVRVQLMGQIFGNHYPGFL. Residues 468–488 form a helical membrane-spanning segment; the sequence is HVFVLNVFVVGAGVLMARFYP. The Lumenal portion of the chain corresponds to 489–495; it reads NIGSIIR. A helical transmembrane segment spans residues 496-516; sequence YSGALCGLALVFVLPSLIHMV. Topologically, residues 517-528 are cytoplasmic; it reads SLKRRGELRWTS. A helical membrane pass occupies residues 529-549; that stretch reads TLFHGFLILLGVANLLGQFFM.

Belongs to the amino acid/polyamine transporter 2 family. SLC38A9 subfamily. Associated component of the Ragulator complex. Associated component of the Rag GTPases heterodimers (RRAGA and RRAGC). Post-translationally, glycosylated.

Its subcellular location is the lysosome membrane. It localises to the late endosome membrane. It carries out the reaction L-leucine(in) = L-leucine(out). It catalyses the reaction L-tyrosine(in) = L-tyrosine(out). The catalysed reaction is L-glutamine(out) = L-glutamine(in). The enzyme catalyses L-asparagine(out) = L-asparagine(in). Amino acid transport activity is increased by sodium. Transport of L-glutamine, leucine and tyrosine is increased by arginine binding. Its function is as follows. Lysosomal amino acid transporter involved in the activation of mTORC1 in response to amino acid levels. Probably acts as an amino acid sensor of the Rag GTPases and Ragulator complexes, 2 complexes involved in amino acid sensing and activation of mTORC1, a signaling complex promoting cell growth in response to growth factors, energy levels, and amino acids. Following activation by amino acids, the Ragulator and Rag GTPases function as a scaffold recruiting mTORC1 to lysosomes where it is in turn activated. SLC38A9 mediates transport of amino acids with low capacity and specificity with a slight preference for polar amino acids. Acts as an arginine sensor. Following activation by arginine binding, mediates transport of L-glutamine, leucine and tyrosine with high efficiency, and is required for the efficient utilization of these amino acids after lysosomal protein degradation. However, the transport mechanism is not well defined and the role of sodium is not clear. Guanine exchange factor (GEF) that, upon arginine binding, stimulates GDP release from RRAGA and therefore activates the Rag GTPase heterodimer and the mTORC1 pathway in response to nutrient sufficiency. This chain is Neutral amino acid transporter 9, found in Danio rerio (Zebrafish).